A 55-amino-acid polypeptide reads, in one-letter code: uncharacterized protein (55 aa).

2 consecutive transmembrane segments (helical) span residues 5 to 25 and 26 to 46; these read LISI…MMHM and LPLY…LYRL.

It localises to the cell membrane. This is an uncharacterized protein from Bacillus subtilis (strain 168).